Here is a 281-residue protein sequence, read N- to C-terminus: Auxin-responsive protein IAA10 (281 aa).

2 disordered regions span residues 1–115 and 130–157; these read MRGG…VVGW and AKENTSETDTKKTATNESDVQKDKEEGE. Residues 7 to 17 show a composition bias toward low complexity; sequence GPTAGEPPGTE. Residues 18 to 35 are compositionally biased toward acidic residues; the sequence is AEAEEVEESSAGDDEELE. The short motif at 36–40 is the EAR-like (transcriptional repression) element; sequence LGLSL. 2 stretches are compositionally biased toward low complexity: residues 36–49 and 63–84; these read LGLSLGSKKQQQQQ and PAAALSPDSSVSSSSPAAAAAA. The segment covering 133–157 has biased composition (basic and acidic residues); that stretch reads NTSETDTKKTATNESDVQKDKEEGE. The region spanning 163–259 is the PB1 domain; it reads AGWVKVNMDG…KRLRIMRTSD (97 aa).

This sequence belongs to the Aux/IAA family. As to quaternary structure, homodimers and heterodimers. As to expression, highly expressed in flowers. Expressed in shoots.

The protein resides in the nucleus. Aux/IAA proteins are short-lived transcriptional factors that function as repressors of early auxin response genes at low auxin concentrations. This Oryza sativa subsp. indica (Rice) protein is Auxin-responsive protein IAA10 (IAA10).